We begin with the raw amino-acid sequence, 405 residues long: Nicotinate phosphoribosyltransferase (405 aa).

Phosphohistidine; by autocatalysis is present on His230.

It belongs to the NAPRTase family. Transiently phosphorylated on a His residue during the reaction cycle. Phosphorylation strongly increases the affinity for substrates and increases the rate of nicotinate D-ribonucleotide production. Dephosphorylation regenerates the low-affinity form of the enzyme, leading to product release.

It catalyses the reaction nicotinate + 5-phospho-alpha-D-ribose 1-diphosphate + ATP + H2O = nicotinate beta-D-ribonucleotide + ADP + phosphate + diphosphate. The protein operates within cofactor biosynthesis; NAD(+) biosynthesis; nicotinate D-ribonucleotide from nicotinate: step 1/1. Its function is as follows. Catalyzes the synthesis of beta-nicotinate D-ribonucleotide from nicotinate and 5-phospho-D-ribose 1-phosphate at the expense of ATP. The sequence is that of Nicotinate phosphoribosyltransferase from Bordetella pertussis (strain Tohama I / ATCC BAA-589 / NCTC 13251).